A 351-amino-acid chain; its full sequence is Anthranilate phosphoribosyltransferase (351 aa).

Residues G89, 92–93 (GD), T97, 99–102 (NIST), 117–125 (KHGNRSASG), and S129 each bind 5-phospho-alpha-D-ribose 1-diphosphate. G89 is a binding site for anthranilate. Position 101 (S101) interacts with Mg(2+). N120 serves as a coordination point for anthranilate. R175 is a binding site for anthranilate. Mg(2+)-binding residues include D234 and E235.

The protein belongs to the anthranilate phosphoribosyltransferase family. Homodimer. It depends on Mg(2+) as a cofactor.

It catalyses the reaction N-(5-phospho-beta-D-ribosyl)anthranilate + diphosphate = 5-phospho-alpha-D-ribose 1-diphosphate + anthranilate. It functions in the pathway amino-acid biosynthesis; L-tryptophan biosynthesis; L-tryptophan from chorismate: step 2/5. Catalyzes the transfer of the phosphoribosyl group of 5-phosphorylribose-1-pyrophosphate (PRPP) to anthranilate to yield N-(5'-phosphoribosyl)-anthranilate (PRA). The polypeptide is Anthranilate phosphoribosyltransferase (Synechococcus sp. (strain CC9902)).